A 328-amino-acid chain; its full sequence is P2Y purinoceptor 3 (328 aa).

Topologically, residues 1-22 (MSMANFTGGRNSCTFHEEFKQV) are extracellular. Residue Asn5 is glycosylated (N-linked (GlcNAc...) asparagine). Residues 23 to 43 (LLPLVYSVVFLLGLPLNAVVI) traverse the membrane as a helical segment. At 44–57 (GQIWLARKALTRTT) the chain is on the cytoplasmic side. A helical transmembrane segment spans residues 58-78 (IYMLNLAMADLLYVCSLPLLI). Residues 79 to 96 (YNYTQKDYWPFGDFTCKF) lie on the Extracellular side of the membrane. Cys94 and Cys172 are disulfide-bonded. Residues 97–117 (VRFQFYTNLHGSILFLTCISV) form a helical membrane-spanning segment. The Cytoplasmic segment spans residues 118–139 (QRYMGICHPLASWHKKKGKKLT). Residues 140 to 160 (WLVCAAVWFIVIAQCLPTFVF) traverse the membrane as a helical segment. At 161-189 (ASTGTQRNRTVCYDLSPPDRSTSYFPYGI) the chain is on the extracellular side. The chain crosses the membrane as a helical span at residues 190-210 (TLTITGFLLPFAAILACYCSM). The Cytoplasmic portion of the chain corresponds to 211 to 231 (ARILCQKDELIGLAVHKKKDK). The chain crosses the membrane as a helical span at residues 232-252 (AVRMIIIVVIVFSISFFPFHL). Over 253 to 275 (TKTIYLIVRSSASLPCPTLQAFA) the chain is Extracellular. Residues 276–298 (IAYKCTRPFASMNSVLDPILFYF) traverse the membrane as a helical segment. The Cytoplasmic portion of the chain corresponds to 299–323 (TQRKFRESTRYLLDKMSSKWRQDHC).

Belongs to the G-protein coupled receptor 1 family.

Its subcellular location is the cell membrane. Functionally, receptor for extracellular ADP &gt; UTP &gt; ATP = UDP. The activity of this receptor is mediated by G proteins which activate a phosphatidylinositol-calcium second messenger system. The chain is P2Y purinoceptor 3 (P2RY3) from Gallus gallus (Chicken).